Consider the following 24-residue polypeptide: Cytochrome c oxidase subunit 5A-2, mitochondrial (24 aa).

This sequence belongs to the cytochrome c oxidase subunit 5A family. As to quaternary structure, component of the cytochrome c oxidase (complex IV, CIV), a multisubunit enzyme composed of 14 subunits. The complex is composed of a catalytic core of 3 subunits MT-CO1, MT-CO2 and MT-CO3, encoded in the mitochondrial DNA, and 11 supernumerary subunits COX4I, COX5A, COX5B, COX6A, COX6B, COX6C, COX7A, COX7B, COX7C, COX8 and NDUFA4, which are encoded in the nuclear genome. The complex exists as a monomer or a dimer and forms supercomplexes (SCs) in the inner mitochondrial membrane with NADH-ubiquinone oxidoreductase (complex I, CI) and ubiquinol-cytochrome c oxidoreductase (cytochrome b-c1 complex, complex III, CIII), resulting in different assemblies (supercomplex SCI(1)III(2)IV(1) and megacomplex MCI(2)III(2)IV(2)).

The protein localises to the mitochondrion inner membrane. Its pathway is energy metabolism; oxidative phosphorylation. Component of the cytochrome c oxidase, the last enzyme in the mitochondrial electron transport chain which drives oxidative phosphorylation. The respiratory chain contains 3 multisubunit complexes succinate dehydrogenase (complex II, CII), ubiquinol-cytochrome c oxidoreductase (cytochrome b-c1 complex, complex III, CIII) and cytochrome c oxidase (complex IV, CIV), that cooperate to transfer electrons derived from NADH and succinate to molecular oxygen, creating an electrochemical gradient over the inner membrane that drives transmembrane transport and the ATP synthase. Cytochrome c oxidase is the component of the respiratory chain that catalyzes the reduction of oxygen to water. Electrons originating from reduced cytochrome c in the intermembrane space (IMS) are transferred via the dinuclear copper A center (CU(A)) of subunit 2 and heme A of subunit 1 to the active site in subunit 1, a binuclear center (BNC) formed by heme A3 and copper B (CU(B)). The BNC reduces molecular oxygen to 2 water molecules using 4 electrons from cytochrome c in the IMS and 4 protons from the mitochondrial matrix. This chain is Cytochrome c oxidase subunit 5A-2, mitochondrial, found in Thunnus obesus (Bigeye tuna).